Here is a 317-residue protein sequence, read N- to C-terminus: Olfactory receptor 2B11 (317 aa).

At 1–29 (MKSDNHSFLGDSPKAFILLGVSDRPWLEL) the chain is on the extracellular side. An N-linked (GlcNAc...) asparagine glycan is attached at Asn5. Residues 30 to 53 (PLFVVLLLSYVLAMLGNVAIILAS) form a helical membrane-spanning segment. The Cytoplasmic portion of the chain corresponds to 54 to 61 (RVDPQLHS). Residues 62 to 83 (PMYIFLSHLSFLDLCYTTTTVP) form a helical membrane-spanning segment. The Extracellular portion of the chain corresponds to 84–104 (QMLVNMGSSQKTISYGGCTVQ). An intrachain disulfide couples Cys101 to Cys193. The chain crosses the membrane as a helical span at residues 105-124 (YAVFHWLGCTECIVLAAMAL). Residues 125-143 (DRYVAICKPLHYAVLMHRA) are Cytoplasmic-facing. The helical transmembrane segment at 144 to 162 (LCQQLVALAWLSGFGNSFV) threads the bilayer. The Extracellular segment spans residues 163–199 (QVVLTVQLPFCGRQVLNNFFCEVPAVIKLSCADTAVN). Asn199 is a glycosylation site (N-linked (GlcNAc...) asparagine). Residues 200 to 223 (DTILAVLVAFFVLVPLALILLSYG) form a helical membrane-spanning segment. Over 224 to 240 (FIARAVLRIQSSKGRHK) the chain is Cytoplasmic. The chain crosses the membrane as a helical span at residues 241–263 (AFGTCSSHLMIVSLFYLPAIYMY). Residues 264-276 (LQPPSSYSQEQGK) are Extracellular-facing. A helical membrane pass occupies residues 277 to 296 (FISLFYSIITPTLNPFTYTL). The Cytoplasmic portion of the chain corresponds to 297–317 (RNKDMKGALRRLLARIWRLCG).

This sequence belongs to the G-protein coupled receptor 1 family.

The protein localises to the cell membrane. In terms of biological role, odorant receptor. This chain is Olfactory receptor 2B11 (OR2B11), found in Homo sapiens (Human).